Consider the following 44-residue polypeptide: Small ribosomal subunit protein eS7 (44 aa).

The segment covering 18–34 (KPTRKSRIKNKQKRPRS) has biased composition (basic residues). The disordered stretch occupies residues 18–44 (KPTRKSRIKNKQKRPRSRTLTAVHDAI).

It belongs to the eukaryotic ribosomal protein eS7 family. Component of the small ribosomal subunit.

It localises to the cytoplasm. Its subcellular location is the cytoskeleton. The protein resides in the microtubule organizing center. It is found in the centrosome. The protein localises to the nucleus. In terms of biological role, component of the small ribosomal subunit. The ribosome is a large ribonucleoprotein complex responsible for the synthesis of proteins in the cell. Required for rRNA maturation. The protein is Small ribosomal subunit protein eS7 (rps7) of Salmo salar (Atlantic salmon).